Reading from the N-terminus, the 403-residue chain is 5,7-dihydroxy-2-methylchromone synthase (403 aa).

H68 contacts CoA. Residue C174 is part of the active site. Position 174 is a cysteine sulfinic acid (-SO2H) (C174). CoA contacts are provided by residues L277, S281, and 318-321 (GGRA).

Belongs to the thiolase-like superfamily. Chalcone/stilbene synthases family. In terms of assembly, homodimer.

The enzyme catalyses 5 malonyl-CoA + 4 H(+) = 5,7-dihydroxy-2-methyl-4H-chromen-4-one + 5 CO2 + 5 CoA + H2O. The protein operates within secondary metabolite biosynthesis; flavonoid biosynthesis. In terms of biological role, catalyzes the iterative condensations of 5 molecules of malonyl-CoA to produce a pentaketide 5,7-dihydroxy-2-methylchromone. This chain is 5,7-dihydroxy-2-methylchromone synthase, found in Aloe arborescens (Kidachi aloe).